The following is a 456-amino-acid chain: O-phospho-L-seryl-tRNA:Cys-tRNA synthase 2 (456 aa).

Residues 146–147, N251, and 274–276 contribute to the pyridoxal 5'-phosphate site; these read AR and SGH. N6-(pyridoxal phosphate)lysine is present on K277.

It belongs to the SepCysS family. As to quaternary structure, homodimer. Interacts with SepRS. Pyridoxal 5'-phosphate is required as a cofactor.

The enzyme catalyses O-phospho-L-seryl-tRNA(Cys) + hydrogen sulfide + H(+) = L-cysteinyl-tRNA(Cys) + phosphate. Its function is as follows. Converts O-phospho-L-seryl-tRNA(Cys) (Sep-tRNA(Cys)) to L-cysteinyl-tRNA(Cys) (Cys-tRNA(Cys)). This is O-phospho-L-seryl-tRNA:Cys-tRNA synthase 2 from Methanospirillum hungatei JF-1 (strain ATCC 27890 / DSM 864 / NBRC 100397 / JF-1).